A 1124-amino-acid chain; its full sequence is MLAYCVQDATVVDVEKRRSPSKHYVYIINVTWSDSTSQTIYRRYSKFFDLQMQLLDKFPIEGGQKDPKQRIIPFLPGKILFRRSHIRDVAVKRLKPIDEYCRALVRLPPHISQCDEVFRFFEARPEDVNPPKEDYGSSKRKSVWLSSWAESPKKDVTGADTNAEPMILEQYVVVSNYKKQENSELSLQAGEVVDVIEKNESGWWFVSTSEEQGWVPATYLEAQNGTRDDSDINTSKTGEVSKRRKAHLRRLDRRWTLGGMVNRQHSREEKYVTVQPYTSQSKDEIGFEKGVTVEVIRKNLEGWWYIRYLGKEGWAPASYLKKAKDDLPTRKKNLAGPVEIIGNIMEISNLLNKKASGDKEAPAEGEGSEAPITKKEISLPILCNASNGSALAIPERTTSKLAQGSPAVARIAPQRAQISSPNLRTRPPPRRESSLGFQLPKPPEPPSVEVEYYTIAEFQSCISDGISFRGGQKAEVIDKNSGGWWYVQIGEKEGWAPASYIDKRKKPNLSRRTSTLTRPKVPPPAPPSKPKEAEENPVGACESQGSPLKVKYEEPEYDVPAFGFDSEPEMNEEPSGDRGSGDKHPAQPRRISPASSLQRAHFKVGESSEDVALEEETIYENEGFRPYTEDTLSARGSSGDSDSPGSSSLSLAVKNSPKSDSPKSSSLLKLKAEKNAQAELGKNQSNISFSSSVTISTTCSSSSSSSSLSKNNGDLKPRSASDAGIRDTPKVGTKKDPDVKAGLASCARAKPSVRPKPVLNRAESQSQEKMDISSLRRQLRPTGQLRGGLKGSRSEDSELPPQMASEGSRRGSADIIPLTATTPPCVPKKEWEGQGATYVTCSAYQKVQDSEISFPEGAEVHVLEKAESGWWYVRFGELEGWAPSHYLVAEENQQPDTASKEGDTGKSSQNEGKSDSLEKIEKRVQALNTVNQSKRATPPIPSKPPGGFGKTSGTVAVKMRNGVRQVAVRPQSVFVSPPPKDNNLSCALRRNESLTATDSLRGVRRNSSFSTARSAAAEAKGRLAERAASQGSESPLLPTQRKGIPVSPVRPKPIEKSQFIHNNLKDVYISIADYEGDEETAGFQEGVSMEVLEKNPNGWWYCQILDEVKPFKGWVPSNYLEKKN.

In terms of domain architecture, PX spans 4-128; the sequence is YCVQDATVVD…RFFEARPEDV (125 aa). Residues 166 to 225 enclose the SH3 1 domain; the sequence is MILEQYVVVSNYKKQENSELSLQAGEVVDVIEKNESGWWFVSTSEEQGWVPATYLEAQNG. Position 256 is a phosphothreonine (Thr-256). Positions 266-325 constitute an SH3 2 domain; that stretch reads SREEKYVTVQPYTSQSKDEIGFEKGVTVEVIRKNLEGWWYIRYLGKEGWAPASYLKKAKD. Phosphoserine occurs at positions 405 and 420. Disordered stretches follow at residues 414–443, 504–672, 692–830, and 886–952; these read QRAQISSPNLRTRPPPRRESSLGFQLPKPP, RKKP…KLKA, SVTI…PKKE, and YLVA…GKTS. The 60-residue stretch at 447–506 folds into the SH3 3 domain; the sequence is SVEVEYYTIAEFQSCISDGISFRGGQKAEVIDKNSGGWWYVQIGEKEGWAPASYIDKRKK. Residues Ser-546 and Ser-566 each carry the phosphoserine modification. A compositionally biased stretch (basic and acidic residues) spans 575–585; it reads SGDRGSGDKHP. Position 592 is a phosphoserine (Ser-592). Over residues 607-619 the composition is skewed to acidic residues; sequence SSEDVALEEETIY. Composition is skewed to low complexity over residues 633 to 669 and 692 to 709; these read SARGSSGDSDSPGSSSLSLAVKNSPKSDSPKSSSLLK and SVTISTTCSSSSSSSSLS. The residue at position 643 (Ser-643) is a Phosphoserine. Over residues 713-739 the composition is skewed to basic and acidic residues; the sequence is GDLKPRSASDAGIRDTPKVGTKKDPDV. Residue Thr-728 is modified to Phosphothreonine. Phosphoserine occurs at positions 764, 766, and 812. Position 822 is a phosphothreonine (Thr-822). An SH3 4 domain is found at 833–892; the sequence is GQGATYVTCSAYQKVQDSEISFPEGAEVHVLEKAESGWWYVRFGELEGWAPSHYLVAEEN. A coiled-coil region spans residues 907 to 937; it reads SSQNEGKSDSLEKIEKRVQALNTVNQSKRAT. The span at 912–924 shows a compositional bias: basic and acidic residues; sequence GKSDSLEKIEKRV. A compositionally biased stretch (polar residues) spans 926-935; it reads ALNTVNQSKR. Phosphoserine is present on residues Ser-993, Ser-1007, Ser-1008, and Ser-1029. The segment at 1020–1050 is disordered; it reads KGRLAERAASQGSESPLLPTQRKGIPVSPVR. Positions 1063–1124 constitute an SH3 5 domain; sequence NLKDVYISIA…VPSNYLEKKN (62 aa).

It belongs to the SH3PXD2 family. Interacts with ADAM12, ADAM15 and ADAM19. Interacts with NOXO1. Interacts (via SH3 domains) with NOXA1; the interaction is direct. Interacts (via N-terminus) with CYBA. Interacts with FASLG. Interacts (via PX domain) with RAB40B (GTP-bound); interaction promotes invadopodia-mediated extracellular matrix degradation. Post-translationally, tyrosine phosphorylated by SRC. Phosphorylation plays a regulatory role in the protein localization. The intramolecular interaction of the PX domain with the third SH3 domain maintains the protein in the cytoplasm and phosphorylation disrupts this interaction, resulting in the redistribution of the protein from cytoplasm to the perimembrane region. Phosphorylated on serine upon DNA damage, probably by ATM or ATR. As to expression, widely expressed. Not found in the spleen and testis.

The protein localises to the cytoplasm. The protein resides in the cell projection. Its subcellular location is the podosome. In terms of biological role, adapter protein involved in invadopodia and podosome formation, extracellular matrix degradation and invasiveness of some cancer cells. Binds matrix metalloproteinases (ADAMs), NADPH oxidases (NOXs) and phosphoinositides. Acts as an organizer protein that allows NOX1- or NOX3-dependent reactive oxygen species (ROS) generation and ROS localization. In association with ADAM12, mediates the neurotoxic effect of amyloid-beta peptide. The polypeptide is SH3 and PX domain-containing protein 2A (Mus musculus (Mouse)).